Here is a 340-residue protein sequence, read N- to C-terminus: Sterol-4-alpha-carboxylate 3-dehydrogenase erg26, decarboxylating (340 aa).

Catalysis depends on Tyr144, which acts as the Proton acceptor. Lys148 provides a ligand contact to NAD(+).

This sequence belongs to the 3-beta-HSD family. As to quaternary structure, heterotetramer of erg25, erg26, erg27 and erg28. Erg28 acts as a scaffold to tether erg27 and other 4,4-demethylation-related enzymes, forming a demethylation enzyme complex, in the endoplasmic reticulum.

The protein resides in the endoplasmic reticulum membrane. The enzyme catalyses 4beta-methylzymosterol-4alpha-carboxylate + NADP(+) = 3-dehydro-4-methylzymosterol + CO2 + NADPH. It participates in steroid biosynthesis; zymosterol biosynthesis; zymosterol from lanosterol: step 4/6. The protein operates within steroid metabolism; ergosterol biosynthesis. Functionally, sterol-4-alpha-carboxylate 3-dehydrogenase; part of the third module of ergosterol biosynthesis pathway that includes by the late steps of the pathway. Erg26 is a catalytic component of the C-4 demethylation complex that catalyzes the oxidative decarboxylation that results in a reduction of the 3-beta-hydroxy group at the C-3 carbon to an oxo group. The third module or late pathway involves the ergosterol synthesis itself through consecutive reactions that mainly occur in the endoplasmic reticulum (ER) membrane. Firstly, the squalene synthase erg9 catalyzes the condensation of 2 farnesyl pyrophosphate moieties to form squalene, which is the precursor of all steroids. Secondly, squalene is converted into lanosterol by the consecutive action of the squalene epoxidase erg1 and the lanosterol synthase erg7. The lanosterol 14-alpha-demethylase erg11/cyp1 catalyzes C14-demethylation of lanosterol to produce 4,4'-dimethyl cholesta-8,14,24-triene-3-beta-ol. In the next steps, a complex process involving various demethylation, reduction and desaturation reactions catalyzed by the C-14 reductase erg24 and the C-4 demethylation complex erg25-erg26-erg27 leads to the production of zymosterol. Erg28 likely functions in the C-4 demethylation complex reaction by tethering erg26 and Erg27 to the endoplasmic reticulum or to facilitate interaction between these proteins. Then, the sterol 24-C-methyltransferase erg6 catalyzes the methyl transfer from S-adenosyl-methionine to the C-24 of zymosterol to form fecosterol. The C-8 sterol isomerase erg2 catalyzes the reaction which results in unsaturation at C-7 in the B ring of sterols and thus converts fecosterol to episterol. The sterol-C5-desaturases erg31 and erg32 then catalyze the introduction of a C-5 double bond in the B ring to produce 5-dehydroepisterol. The C-22 sterol desaturase erg5 further converts 5-dehydroepisterol into ergosta-5,7,22,24(28)-tetraen-3beta-ol by forming the C-22(23) double bond in the sterol side chain. Finally, ergosta-5,7,22,24(28)-tetraen-3beta-ol is substrate of the C-24(28) sterol reductase erg4 to produce ergosterol. In the genus Schizosaccharomyces, a second route exists between lanosterol and fecosterol, via the methylation of lanosterol to eburicol by erg6, followed by C14-demethylation by erg11/cyp1 and C4-demethylation by the demethylation complex erg25-erg26-erg27. The chain is Sterol-4-alpha-carboxylate 3-dehydrogenase erg26, decarboxylating from Schizosaccharomyces pombe (strain 972 / ATCC 24843) (Fission yeast).